The sequence spans 226 residues: ATP-dependent dethiobiotin synthetase BioD (226 aa).

ATP is bound at residue 13–18 (DVGKTL). Thr17 lines the Mg(2+) pocket. Lys38 is a catalytic residue. Residues Asp55, 117 to 120 (EGAG), 177 to 178 (NR), 206 to 208 (PFV), and Glu213 each bind ATP. Mg(2+) contacts are provided by Asp55 and Glu117.

It belongs to the dethiobiotin synthetase family. Homodimer. It depends on Mg(2+) as a cofactor.

It localises to the cytoplasm. It catalyses the reaction (7R,8S)-7,8-diammoniononanoate + CO2 + ATP = (4R,5S)-dethiobiotin + ADP + phosphate + 3 H(+). The protein operates within cofactor biosynthesis; biotin biosynthesis; biotin from 7,8-diaminononanoate: step 1/2. Its function is as follows. Catalyzes a mechanistically unusual reaction, the ATP-dependent insertion of CO2 between the N7 and N8 nitrogen atoms of 7,8-diaminopelargonic acid (DAPA, also called 7,8-diammoniononanoate) to form a ureido ring. The protein is ATP-dependent dethiobiotin synthetase BioD of Aeromonas hydrophila subsp. hydrophila (strain ATCC 7966 / DSM 30187 / BCRC 13018 / CCUG 14551 / JCM 1027 / KCTC 2358 / NCIMB 9240 / NCTC 8049).